The chain runs to 153 residues: MNEKPVLGIQDIQNLLPHRYPFLLVDKILSYDLNTRSVVAQKNVTINEPFFAGHFPGAPIMPGVLILEALAQAAGVLLGIILENDRDKKIALFLGIQKAKFRQPVKPGDVLTLKAEFSLISAKGGKAFAQAFVGSQVVAEGELSFVLVKKESI.

H54 is an active-site residue.

The protein belongs to the thioester dehydratase family. FabZ subfamily.

It is found in the cytoplasm. It catalyses the reaction a (3R)-hydroxyacyl-[ACP] = a (2E)-enoyl-[ACP] + H2O. In terms of biological role, involved in unsaturated fatty acids biosynthesis. Catalyzes the dehydration of short chain beta-hydroxyacyl-ACPs and long chain saturated and unsaturated beta-hydroxyacyl-ACPs. This Chlamydia trachomatis serovar L2 (strain ATCC VR-902B / DSM 19102 / 434/Bu) protein is 3-hydroxyacyl-[acyl-carrier-protein] dehydratase FabZ.